The primary structure comprises 373 residues: Pollen allergen KBG 31 (373 aa).

A signal peptide spans 1-28 (MDKANGAYKTALKAASAVAPAEKFPVFQ).

This sequence belongs to the Poa p IX/Phl p VI allergen family. In terms of tissue distribution, pollen.

This chain is Pollen allergen KBG 31, found in Poa pratensis (Kentucky bluegrass).